The sequence spans 532 residues: Telomerase Cajal body protein 1 (532 aa).

The segment at 1-53 (MKTSEERLLAPDSLPPDLAPAPVPQGSPAEKNTDFEPVPPPCGGDDQPQLATD) is disordered. A compositionally biased stretch (pro residues) spans 13 to 25 (SLPPDLAPAPVPQ). 3 positions are modified to phosphoserine: S27, S61, and S83. Residues 80–122 (SELSPGIEEQDVSEHASLPGEETNLPELESGEATEGVSEERAE) are disordered. WD repeat units lie at residues 151-190 (RSEN…YSEQ), 206-251 (EGDT…LRAS), 256-297 (NHLD…RDCE), 307-348 (GQSG…ALLG), 349-389 (GHQG…HLLW), and 395-434 (VTTN…SDDS). Position 474 is a phosphothreonine (T474). The residue at position 476 (S476) is a Phosphoserine. The interval 510-532 (DPSSPVDDQDEKGQRRTEAVGMS) is disordered. The span at 520–532 (EKGQRRTEAVGMS) shows a compositional bias: basic and acidic residues.

The protein belongs to the TCAB1 family. In terms of assembly, component of the telomerase holoenzyme complex composed of one molecule of TERT, one molecule of WRAP53/TCAB1, two molecules of H/ACA ribonucleoprotein complex subunits DKC1, NOP10, NHP2 and GAR1, and a telomerase RNA template component (TERC). The telomerase holoenzyme complex is associated with TEP1, SMG6/EST1A and POT1. Interacts with the chaperonin-containing T-complex (TRiC) complex; which mediates the folding of WRAP53/TCAB1. Interacts with COIL. Interacts with SMN1. Interacts with RNF8. Interacts with histone H2AX. Phosphorylated at Ser-61 by ATM in response to DNA damage, promoting its interaction with histone H2AX and localization to sites of DNA double-strand breaks.

It is found in the nucleus. The protein localises to the cajal body. It localises to the chromosome. Its subcellular location is the telomere. Its function is as follows. RNA chaperone that plays a key role in telomere maintenance and RNA localization to Cajal bodies. Specifically recognizes and binds the Cajal body box (CAB box) present in both small Cajal body RNAs (scaRNAs) and telomerase RNA template component (TERC). Essential component of the telomerase holoenzyme complex, a ribonucleoprotein complex essential for the replication of chromosome termini that elongates telomeres in most eukaryotes. In the telomerase holoenzyme complex, required to stimulate the catalytic activity of the complex. Acts by specifically binding the CAB box of the TERC RNA and controlling the folding of the CR4/CR5 region of the TERC RNA, a critical step for telomerase activity. In addition, also controls telomerase holoenzyme complex localization to Cajal body. During S phase, required for delivery of TERC to telomeres during S phase and for telomerase activity. In addition to its role in telomere maintenance, also required for Cajal body formation, probably by mediating localization of scaRNAs to Cajal bodies. Also plays a role in DNA repair: phosphorylated by ATM in response to DNA damage and relocalizes to sites of DNA double-strand breaks to promote the repair of DNA double-strand breaks. Acts by recruiting the ubiquitin ligase RNF8 to DNA breaks and promote both homologous recombination (HR) and non-homologous end joining (NHEJ). The chain is Telomerase Cajal body protein 1 from Mus musculus (Mouse).